We begin with the raw amino-acid sequence, 242 residues long: 4-hydroxy-tetrahydrodipicolinate reductase (242 aa).

Residues 8–13, 75–77, and 99–102 each bind NAD(+); these read GAKGRM, GTT, and ATNM. Catalysis depends on His131, which acts as the Proton donor/acceptor. His132 contacts (S)-2,3,4,5-tetrahydrodipicolinate. Lys135 serves as the catalytic Proton donor. 141 to 142 contacts (S)-2,3,4,5-tetrahydrodipicolinate; it reads GT.

The protein belongs to the DapB family.

It is found in the cytoplasm. It carries out the reaction (S)-2,3,4,5-tetrahydrodipicolinate + NAD(+) + H2O = (2S,4S)-4-hydroxy-2,3,4,5-tetrahydrodipicolinate + NADH + H(+). The catalysed reaction is (S)-2,3,4,5-tetrahydrodipicolinate + NADP(+) + H2O = (2S,4S)-4-hydroxy-2,3,4,5-tetrahydrodipicolinate + NADPH + H(+). The protein operates within amino-acid biosynthesis; L-lysine biosynthesis via DAP pathway; (S)-tetrahydrodipicolinate from L-aspartate: step 4/4. Its function is as follows. Catalyzes the conversion of 4-hydroxy-tetrahydrodipicolinate (HTPA) to tetrahydrodipicolinate. The chain is 4-hydroxy-tetrahydrodipicolinate reductase from Campylobacter jejuni subsp. jejuni serotype O:2 (strain ATCC 700819 / NCTC 11168).